The following is an 80-amino-acid chain: Exodeoxyribonuclease 7 small subunit (80 aa).

Belongs to the XseB family. In terms of assembly, heterooligomer composed of large and small subunits.

Its subcellular location is the cytoplasm. It catalyses the reaction Exonucleolytic cleavage in either 5'- to 3'- or 3'- to 5'-direction to yield nucleoside 5'-phosphates.. Its function is as follows. Bidirectionally degrades single-stranded DNA into large acid-insoluble oligonucleotides, which are then degraded further into small acid-soluble oligonucleotides. The protein is Exodeoxyribonuclease 7 small subunit of Pseudomonas putida (strain GB-1).